A 160-amino-acid chain; its full sequence is Major pollen allergen Aln g 1 (160 aa).

Belongs to the BetVI family.

The chain is Major pollen allergen Aln g 1 from Alnus glutinosa (European alder).